The chain runs to 262 residues: Small ribosomal subunit protein eS4x (262 aa).

Residues 42–104 (LPLVLIIRNR…TNENFRLLYD (63 aa)) form the S4 RNA-binding domain.

This sequence belongs to the eukaryotic ribosomal protein eS4 family.

The protein resides in the cytoplasm. The protein is Small ribosomal subunit protein eS4x (RPS4D) of Arabidopsis thaliana (Mouse-ear cress).